We begin with the raw amino-acid sequence, 153 residues long: Endoribonuclease YbeY (153 aa).

His116, His120, and His126 together coordinate Zn(2+).

The protein belongs to the endoribonuclease YbeY family. Zn(2+) serves as cofactor.

It localises to the cytoplasm. Functionally, single strand-specific metallo-endoribonuclease involved in late-stage 70S ribosome quality control and in maturation of the 3' terminus of the 16S rRNA. The sequence is that of Endoribonuclease YbeY from Paraburkholderia phymatum (strain DSM 17167 / CIP 108236 / LMG 21445 / STM815) (Burkholderia phymatum).